The following is a 114-amino-acid chain: Lectin MVL (114 aa).

Repeat unit 1 spans residues 2 to 55; that stretch reads ASYKVNIPAGPLWSNAEAQQVGPKIAAAHQGNFTGQWTTVVESAMSVVEVELQV. A carbohydrate-binding positions include 12–16, glutamine 20, and 36–44; these read PLWSN and GQWTTVVES. A linker region spans residues 56 to 60; it reads ENTGI. Repeat unit 2 spans residues 61-114; sequence HEFKTDVLAGPLWSNDEAQKLGPQIAASYGAEFTGQWRTIVEGVMSVIQIKYTF. Residues 71 to 75, glutamine 79, and 95 to 103 contribute to the a carbohydrate site; these read PLWSN and GQWRTIVEG.

In terms of assembly, homodimer.

The protein localises to the cytoplasm. Carbohydrate-binding protein that binds oligomannosides such as Man(6)GlcNAc(2) with sub-micromolar affinities. The specificity of MVL is unique in that its minimal target comprises the Man-alpha-(1-&gt;6)-Man-beta-(1-&gt;4)-GlcNAc-beta-(1-&gt;4)-GlcNAc tetrasaccharide core (Man(2)A) found in N-linked oligomannosides. Displays hemagglutininating activity on rabbit, horse and hen erythrocytes. This activity is inhibited by yeast mannan. Does not bind mono- and disaccharides. Inhibits HIV-1 envelope-mediated cell fusion at nanomolar concentrations through carbohydrate-mediated interactions with high-mannose residues on the surface of the HIV envelope glycoprotein gp120. Its function is as follows. Unexpectedly for a lectin, one of the 2 oligomannose binding sites of MVL can catalyze the cleavage of chitin fragments (such as chitotriose, i.e. GlcNAc(3) or GlcNAc-beta-(1-&gt;4)-GlcNAcbeta-(1-&gt;4)-GlcNAc, and chitotetraose, i.e. GlcNAc(4)) to GlcNAc. This weak beta-1,4-glycosidase activity is restricted to the C-terminal carbohydrate-binding site. Does not cleave Man(3)GlcNAc(2) or the tetrasaccharide Man(2)A. This is Lectin MVL (mvl) from Microcystis viridis (Polycystis viridis).